Reading from the N-terminus, the 752-residue chain is Translation initiation factor IF-2 (752 aa).

The segment at 26–167 (RQGMGVKSHM…QPTQRKDKPL (142 aa)) is disordered. A compositionally biased stretch (polar residues) spans 34–47 (HMSSVTPDQAQQLR). The span at 72 to 81 (KQNNHQAQNH) shows a compositional bias: low complexity. Residues 83-96 (QHHDHDKTQNERPQ) are compositionally biased toward basic and acidic residues. The span at 101 to 129 (SRSNNGTKDNNQHQNNGGRFGGSLNNDQG) shows a compositional bias: polar residues. Residues 131–150 (NGKRFNKKNKKNKKHNKNKR) show a composition bias toward basic residues. Residues 151 to 167 (LREVAHKQPTQRKDKPL) show a composition bias toward basic and acidic residues. A tr-type G domain is found at 253–422 (TRPAVVTVMG…LLQAEMLELK (170 aa)). Positions 262–269 (GHVDHGKT) are G1. 262–269 (GHVDHGKT) contacts GTP. The tract at residues 287 to 291 (GITQE) is G2. The G3 stretch occupies residues 308 to 311 (DTPG). GTP-binding positions include 308–312 (DTPGH) and 362–365 (NKID). The G4 stretch occupies residues 362 to 365 (NKID). Residues 398–400 (SAK) form a G5 region.

Belongs to the TRAFAC class translation factor GTPase superfamily. Classic translation factor GTPase family. IF-2 subfamily.

It localises to the cytoplasm. Functionally, one of the essential components for the initiation of protein synthesis. Protects formylmethionyl-tRNA from spontaneous hydrolysis and promotes its binding to the 30S ribosomal subunits. Also involved in the hydrolysis of GTP during the formation of the 70S ribosomal complex. The chain is Translation initiation factor IF-2 from Limosilactobacillus reuteri (strain DSM 20016) (Lactobacillus reuteri).